A 78-amino-acid chain; its full sequence is Metallothionein-like protein type 2 (78 aa).

Belongs to the metallothionein superfamily. Type 15 family.

Metallothioneins have a high content of cysteine residues that bind various heavy metals. This Nicotiana glutinosa (Tobacco) protein is Metallothionein-like protein type 2.